Here is a 376-residue protein sequence, read N- to C-terminus: MASPKLHDFRHIVVKVGSSLLIDSAAGEVRAGWLAALAADIAELHRGGRDVMVVSSGSIALGRSRLKLPRGPLKLEESQAAAAVGQIELARTWSEVLGAHGIGAGQILVTFQDTEERRRYLNARSTIAKLLEWRAVPVINENDTVATTEIRYGDNDRLAARVATMASADLLILLSDIDGLYTAPPGSNPDATLIPVVEAITAEIEGMAGAAGSELSRGGMRTKIEAAKIATSAGTHMLIASGKIDHPLKAIADGGKCTWFLTPANPVTARKRWIAGTLEPKGTLTIDAGAVSALRAGKSLLPAGVIRVDGQFSRGDAVIVRGPDTHEIGRGLVAYDAEDAEKIKGHSSPDVMMILGITGRAEMIHRDDLVVGTAPT.

K15 is an ATP binding site. Substrate is bound by residues S56, D143, and N155. 175 to 176 is an ATP binding site; sequence SD. A PUA domain is found at 281-358; it reads KGTLTIDAGA…PDVMMILGIT (78 aa).

This sequence belongs to the glutamate 5-kinase family.

It localises to the cytoplasm. It carries out the reaction L-glutamate + ATP = L-glutamyl 5-phosphate + ADP. It participates in amino-acid biosynthesis; L-proline biosynthesis; L-glutamate 5-semialdehyde from L-glutamate: step 1/2. Functionally, catalyzes the transfer of a phosphate group to glutamate to form L-glutamate 5-phosphate. The sequence is that of Glutamate 5-kinase from Rhodopseudomonas palustris (strain ATCC BAA-98 / CGA009).